We begin with the raw amino-acid sequence, 273 residues long: Putative pyruvate, phosphate dikinase regulatory protein (273 aa).

149–156 (GPSRTSKT) is an ADP binding site.

The protein belongs to the pyruvate, phosphate/water dikinase regulatory protein family. PDRP subfamily.

The catalysed reaction is N(tele)-phospho-L-histidyl/L-threonyl-[pyruvate, phosphate dikinase] + ADP = N(tele)-phospho-L-histidyl/O-phospho-L-threonyl-[pyruvate, phosphate dikinase] + AMP + H(+). It catalyses the reaction N(tele)-phospho-L-histidyl/O-phospho-L-threonyl-[pyruvate, phosphate dikinase] + phosphate + H(+) = N(tele)-phospho-L-histidyl/L-threonyl-[pyruvate, phosphate dikinase] + diphosphate. Its function is as follows. Bifunctional serine/threonine kinase and phosphorylase involved in the regulation of the pyruvate, phosphate dikinase (PPDK) by catalyzing its phosphorylation/dephosphorylation. The polypeptide is Putative pyruvate, phosphate dikinase regulatory protein (Rickettsia conorii (strain ATCC VR-613 / Malish 7)).